The sequence spans 71 residues: Paralithocin 2 (71 aa).

The signal sequence occupies residues 1–23 (MGAAKVLLVVLAVMVAVPNLAEG). Cystine bridges form between C29/C58, C34/C54, C39/C52, and C44/C55. R70 bears the Arginine amide; partial mark.

It belongs to the paralithocin family. In terms of processing, the amidated form is probably the active form.

Has antibacterial activity, mainly against marine Gram-positive bacteria like C.maltaromaticum (MIC=50 uM), C.mobile (MIC=50 uM), C.divergens (MIC=50 uM) and C.funditum (MIC=25 uM) but also against C.glutamicum (MIC=12.5 uM). Has very little or no activity against Gram-negative bacteria. The protein is Paralithocin 2 of Paralithodes camtschaticus (Red king crab).